A 309-amino-acid chain; its full sequence is Elongation factor Ts (309 aa).

The involved in Mg(2+) ion dislocation from EF-Tu stretch occupies residues 82–85; the sequence is TDFV.

The protein belongs to the EF-Ts family.

It is found in the cytoplasm. Functionally, associates with the EF-Tu.GDP complex and induces the exchange of GDP to GTP. It remains bound to the aminoacyl-tRNA.EF-Tu.GTP complex up to the GTP hydrolysis stage on the ribosome. This is Elongation factor Ts from Rickettsia peacockii (strain Rustic).